A 94-amino-acid polypeptide reads, in one-letter code: Selenoprotein K (94 aa).

The helical transmembrane segment at 20-42 threads the bilayer; it reads LSFITDFFWGIAEFVVLFFRTLL. The segment at 48–94 is disordered; that stretch reads KRRGYGGSSDSRYDDGRGPPGNPPRRMGRINHLRGPNPPPMAGGUGR. A non-standard amino acid (selenocysteine) is located at residue Sec-92.

Belongs to the selenoprotein K family. As to quaternary structure, interacts with DERL1, DERL2, DERL3 and SELENOS. The SELENOK-SELENOS complex interacts with VCP. Interacts with ZDHHC6. In terms of processing, cleaved by CAPN2/m-calpain in resting macrophages but not in activated macrophages. Macrophage activation up-regulates expression of the calpain inhibitor CAST/calpastatin, resulting in inhibition of CAPN2 activity. Post-translationally, truncated SELENOK proteins produced by failed UGA/Sec decoding are ubiquitinated by the CRL2(KLHDC2) complex, which recognizes the diglycine (Gly-Gly) at the C-terminus of truncated SELENOK proteins.

Its subcellular location is the endoplasmic reticulum membrane. The protein resides in the cell membrane. Required for Ca(2+) flux in immune cells and plays a role in T-cell proliferation and in T-cell and neutrophil migration. Involved in endoplasmic reticulum-associated degradation (ERAD) of soluble glycosylated proteins. Required for palmitoylation and cell surface expression of CD36 and involved in macrophage uptake of low-density lipoprotein and in foam cell formation. Together with ZDHHC6, required for palmitoylation of ITPR1 in immune cells, leading to regulate ITPR1 stability and function. Plays a role in protection of cells from ER stress-induced apoptosis. Protects cells from oxidative stress when overexpressed in cardiomyocytes. The polypeptide is Selenoprotein K (Sus scrofa (Pig)).